Reading from the N-terminus, the 165-residue chain is Large ribosomal subunit protein uL10 (165 aa).

It belongs to the universal ribosomal protein uL10 family. Part of the ribosomal stalk of the 50S ribosomal subunit. The N-terminus interacts with L11 and the large rRNA to form the base of the stalk. The C-terminus forms an elongated spine to which L12 dimers bind in a sequential fashion forming a multimeric L10(L12)X complex.

Its function is as follows. Forms part of the ribosomal stalk, playing a central role in the interaction of the ribosome with GTP-bound translation factors. In Salmonella agona (strain SL483), this protein is Large ribosomal subunit protein uL10.